Consider the following 410-residue polypeptide: Scarecrow-like protein 32 (410 aa).

The region spanning 18–408 (LRGCGDANFM…HSVVFATVWV (391 aa)) is the GRAS domain. Residues 25–88 (NFMEQLLLHC…AVSKTPTLSS (64 aa)) form a leucine repeat I (LRI) region. The interval 107–188 (LAAFVDLTPW…HFPPFINISY (82 aa)) is VHIID. The VHIID motif lies at 138 to 142 (VHIVD). Residues 190–227 (ELGSKLVNFATTRNITMEFTIVPSTYSDGFSSLLQQLR) are leucine repeat II (LRII). The PFYRE stretch occupies residues 237 to 329 (LVVNCHMMLR…EAEISWKIEN (93 aa)). Positions 332 to 408 (AKEGAERVER…HSVVFATVWV (77 aa)) are SAW.

Belongs to the GRAS family. In terms of tissue distribution, expressed in seedlings, leaves and flowers.

Its subcellular location is the nucleus. In terms of biological role, probable transcription factor involved in plant development. The polypeptide is Scarecrow-like protein 32 (SCL32) (Arabidopsis thaliana (Mouse-ear cress)).